Consider the following 248-residue polypeptide: Thioredoxin-like protein AAED1, chloroplastic (248 aa).

The transit peptide at 1-52 (MAIALSSSSTITSITLQPKLKTIHGLGTVLPGYSVKSHFRSVSLRRSAVVVS) directs the protein to the chloroplast. At Ala-53 the chain carries N-acetylalanine.

Belongs to the peroxiredoxin-like PRXL2 family. PRXL2C subfamily.

The protein localises to the plastid. It localises to the chloroplast. In Arabidopsis thaliana (Mouse-ear cress), this protein is Thioredoxin-like protein AAED1, chloroplastic.